The primary structure comprises 186 residues: ATP synthase subunit b, chloroplastic (186 aa).

The helical transmembrane segment at 27-49 (LATNPINLSVVLGVLIFFGKGVL) threads the bilayer.

The protein belongs to the ATPase B chain family. In terms of assembly, F-type ATPases have 2 components, F(1) - the catalytic core - and F(0) - the membrane proton channel. F(1) has five subunits: alpha(3), beta(3), gamma(1), delta(1), epsilon(1). F(0) has four main subunits: a(1), b(1), b'(1) and c(10-14). The alpha and beta chains form an alternating ring which encloses part of the gamma chain. F(1) is attached to F(0) by a central stalk formed by the gamma and epsilon chains, while a peripheral stalk is formed by the delta, b and b' chains.

The protein localises to the plastid. The protein resides in the chloroplast thylakoid membrane. Functionally, f(1)F(0) ATP synthase produces ATP from ADP in the presence of a proton or sodium gradient. F-type ATPases consist of two structural domains, F(1) containing the extramembraneous catalytic core and F(0) containing the membrane proton channel, linked together by a central stalk and a peripheral stalk. During catalysis, ATP synthesis in the catalytic domain of F(1) is coupled via a rotary mechanism of the central stalk subunits to proton translocation. Component of the F(0) channel, it forms part of the peripheral stalk, linking F(1) to F(0). The chain is ATP synthase subunit b, chloroplastic from Illicium oligandrum (Star anise).